The primary structure comprises 208 residues: Imidazoleglycerol-phosphate dehydratase (208 aa).

This sequence belongs to the imidazoleglycerol-phosphate dehydratase family.

The protein resides in the cytoplasm. It carries out the reaction D-erythro-1-(imidazol-4-yl)glycerol 3-phosphate = 3-(imidazol-4-yl)-2-oxopropyl phosphate + H2O. The protein operates within amino-acid biosynthesis; L-histidine biosynthesis; L-histidine from 5-phospho-alpha-D-ribose 1-diphosphate: step 6/9. This chain is Imidazoleglycerol-phosphate dehydratase, found in Hyphomonas neptunium (strain ATCC 15444).